A 322-amino-acid polypeptide reads, in one-letter code: Autophagy protein 5 (322 aa).

Lys-158 is covalently cross-linked (Glycyl lysine isopeptide (Lys-Gly) (interchain with G-Cter in atg12)).

This sequence belongs to the ATG5 family. In terms of assembly, conjugated with atg12. Conjugated to atg12; which is essential for autophagy.

The protein resides in the preautophagosomal structure membrane. Involved in cytoplasm to vacuole transport (Cvt) and autophagic vesicle formation. Autophagy is essential for maintenance of amino acid levels and protein synthesis under nitrogen starvation. Required for selective autophagic degradation of the nucleus (nucleophagy). Also required for mitophagy, which eliminates defective or superfluous mitochondria in order to fulfill cellular energy requirements and prevent excess ROS production. Conjugation with atg12, through a ubiquitin-like conjugating system involving atg7 as an E1-like activating enzyme and atg10 as an E2-like conjugating enzyme, is essential for its function. The atg12-atg5 conjugate acts as an E3-like enzyme which is required for lipidation of atg8 and atg8 association to the vesicle membranes. In Aspergillus oryzae (strain ATCC 42149 / RIB 40) (Yellow koji mold), this protein is Autophagy protein 5 (atg5).